The following is a 144-amino-acid chain: HTH-type transcriptional regulator MntR (144 aa).

The HTH dtxR-type domain maps to 1 to 63; the sequence is MTTPSMEDYI…YEKYRGLILT (63 aa). Mn(2+)-binding residues include Asp8, Glu11, His77, Glu99, Glu102, and His103.

The protein belongs to the DtxR/MntR family. In terms of assembly, homodimer.

Its subcellular location is the cytoplasm. With respect to regulation, DNA binding is strongly activated by Mn(2+). Central regulator of manganese homeostasis. In Bacillus pumilus (strain SAFR-032), this protein is HTH-type transcriptional regulator MntR.